Here is a 727-residue protein sequence, read N- to C-terminus: Rho-related BTB domain-containing protein 2 (727 aa).

Residues 1-210 (MDSDMDYERP…DNAIRAALIS (210 aa)) are rho-like. Residues 21–28 (GDNAVGKT), 84–88 (DTFGD), and 140–143 (CQLD) contribute to the GTP site. BTB domains follow at residues 266–442 (ADVI…DENE) and 500–567 (SDVT…TSSP). The segment at 304-333 (ELGGPSEPGGTHPEDHQGHSDQHHHHHHHH) is disordered. A compositionally biased stretch (basic and acidic residues) spans 315–324 (HPEDHQGHSD). The disordered stretch occupies residues 703-727 (FWNSPSSPSSSAASSSSPSSSSAVV). Residues 706 to 727 (SPSSPSSSAASSSSPSSSSAVV) are compositionally biased toward low complexity.

It belongs to the small GTPase superfamily. Rho family. Interacts with HSP90AA1 and HSP90AB1. Forms a complex with CUL3 and RBX1. Interacts (via BTB 1 domain) with CUL3. Interacts with MSI2. Post-translationally, autoubiquitinated by RHOBTB2-CUL3-RBX1 ubiquitin ligase complex. Ubiquitous, with highest levels in neural tissues. Expression is also detected in fetal lung, heart, and brain.

In terms of biological role, regulator of cell proliferation and apoptosis. It likely functions as a substrate-adapter that recruits key substrates, e.g. MSI2, to CUL3-based ubiquitin ligase complexes for degradation. Required for MSI2 ubiquitination and degradation. The protein is Rho-related BTB domain-containing protein 2 (RHOBTB2) of Homo sapiens (Human).